Reading from the N-terminus, the 415-residue chain is Homoserine O-succinyltransferase (415 aa).

The AB hydrolase-1 domain maps to 69–383 (NAVLVCHALN…PHGHDAFLLD (315 aa)). Residue S175 is the Nucleophile of the active site. R245 serves as a coordination point for substrate. Residues D344 and H377 contribute to the active site. A substrate-binding site is contributed by D378.

It belongs to the AB hydrolase superfamily. MetX family. In terms of assembly, homodimer.

The protein resides in the cytoplasm. The enzyme catalyses L-homoserine + succinyl-CoA = O-succinyl-L-homoserine + CoA. The protein operates within amino-acid biosynthesis; L-methionine biosynthesis via de novo pathway; O-succinyl-L-homoserine from L-homoserine: step 1/1. Functionally, transfers a succinyl group from succinyl-CoA to L-homoserine, forming succinyl-L-homoserine. This Bordetella parapertussis (strain 12822 / ATCC BAA-587 / NCTC 13253) protein is Homoserine O-succinyltransferase.